The primary structure comprises 587 residues: Calcium/calmodulin-dependent protein kinase kinase 2 (587 aa).

The segment covering methionine 1–serine 11 has biased composition (polar residues). 2 disordered regions span residues methionine 1–proline 32 and glutamate 74–aspartate 115. Serine 2 is subject to N-acetylserine. Phosphoserine occurs at positions 99, 113, 128, 132, and 136. Over residues glutamine 101–aspartate 115 the composition is skewed to polar residues. Positions tyrosine 164 to valine 445 constitute a Protein kinase domain. Residues isoleucine 170–valine 178 and lysine 193 contribute to the ATP site. The RP domain stretch occupies residues glutamine 203 to proline 225. Residues alanine 204–glutamine 224 form a disordered region. Residue aspartate 311 is the Proton acceptor of the active site. The segment at glutamate 471 to histidine 476 is autoinhibitory domain. Residues valine 474–phenylalanine 499 form a calmodulin-binding region. A phosphoserine mark is found at serine 494 and serine 510. The segment at glycine 496–glutamate 587 is disordered. Residues proline 520 to glutamine 535 show a composition bias toward basic and acidic residues. A compositionally biased stretch (pro residues) spans proline 569–glutamine 579. Position 571 is a phosphoserine (serine 571).

It belongs to the protein kinase superfamily. Ser/Thr protein kinase family. As to quaternary structure, interacts with calmodulin. Post-translationally, phosphorylated by PKA. Each isoform may show a different pattern of phosphorylation. Autophosphorylated. As to expression, mainly expressed in brain, but detected in all tissues tested (at protein level). In the brain, isoform 1 may be predominant. with high levels in the cerebellum and hippocampus, although isoform 3 is detectable. Isoform 3 is also expressed in lung.

The protein resides in the nucleus. It is found in the cytoplasm. Its subcellular location is the cell projection. It localises to the neuron projection. The catalysed reaction is L-seryl-[protein] + ATP = O-phospho-L-seryl-[protein] + ADP + H(+). It catalyses the reaction L-threonyl-[protein] + ATP = O-phospho-L-threonyl-[protein] + ADP + H(+). Its activity is regulated as follows. Activated by Ca(2+)/calmodulin. Binding of calmodulin may relieve intrasteric autoinhibition. Autophosphorylation does not alter activity or regulation by Ca(2+)/calmodulin. In part, activity is independent on Ca(2+)/calmodulin. In terms of biological role, calcium/calmodulin-dependent protein kinase belonging to a proposed calcium-triggered signaling cascade involved in a number of cellular processes. Phosphorylates CAMK1 and CAMK4. Phosphorylates CAMK1D. Seems to be involved in hippocampal activation of CREB1. Efficiently phosphorylates 5'-AMP-activated protein kinase (AMPK) trimer, including that consisting of PRKAA1, PRKAB1 and PRKAG1. This phosphorylation is stimulated in response to Ca(2+) signals. May play a role in neurite growth. Isoform 2 may promote neurite elongation, while isoform 1 may promoter neurite branching. This Rattus norvegicus (Rat) protein is Calcium/calmodulin-dependent protein kinase kinase 2 (Camkk2).